The chain runs to 84 residues: Serine palmitoyltransferase-regulating protein TSC3 (84 aa).

The helical transmembrane segment at 63–83 threads the bilayer; that stretch reads LHTIFLVVVSLSLFGLLKYIF.

The protein resides in the endoplasmic reticulum membrane. Stimulates the activity of serine palmitoyltransferase (SPT), and thus plays a role in the biosynthesis of sphingolipids. The protein is Serine palmitoyltransferase-regulating protein TSC3 (TSC3) of Kluyveromyces lactis (strain ATCC 8585 / CBS 2359 / DSM 70799 / NBRC 1267 / NRRL Y-1140 / WM37) (Yeast).